A 401-amino-acid polypeptide reads, in one-letter code: Protein zntC (401 aa).

Helical transmembrane passes span 33–53 (GGLI…PWFL), 61–81 (LVSV…GAGF), and 114–134 (ITIV…SGGL). The interval 141–247 (NHMDLSQHNH…SHKDEKDSEK (107 aa)) is disordered. Residues 167-184 (GDDDDDDVNEDQEEDSTK) show a composition bias toward acidic residues. Over residues 200–209 (HNSSNSSSNG) the composition is skewed to low complexity. Residues 212–225 (HGLKKKKKSKKEHG) are compositionally biased toward basic residues. Positions 226–247 (HGHNHDHSSNGHSHKDEKDSEK) are enriched in basic and acidic residues. Helical transmembrane passes span 256 to 276 (AWVF…GLGS), 285 to 305 (GLLI…GIAI), 316 to 336 (CIAL…GMAI), 351 to 371 (GIIL…ELLP), and 381 to 401 (KLKL…ALWV).

It belongs to the ZIP transporter (TC 2.A.5) family.

It is found in the membrane. Functionally, may transport divalent cations. May participate, with dstA, in the regulation of the differentiation of stalk cells during development. This is Protein zntC (zntC) from Dictyostelium discoideum (Social amoeba).